A 181-amino-acid polypeptide reads, in one-letter code: Large ribosomal subunit protein uL5 (181 aa).

Belongs to the universal ribosomal protein uL5 family. In terms of assembly, part of the 50S ribosomal subunit; part of the 5S rRNA/L5/L18/L25 subcomplex. Contacts the 5S rRNA and the P site tRNA. Forms a bridge to the 30S subunit in the 70S ribosome.

Its function is as follows. This is one of the proteins that bind and probably mediate the attachment of the 5S RNA into the large ribosomal subunit, where it forms part of the central protuberance. In the 70S ribosome it contacts protein S13 of the 30S subunit (bridge B1b), connecting the 2 subunits; this bridge is implicated in subunit movement. Contacts the P site tRNA; the 5S rRNA and some of its associated proteins might help stabilize positioning of ribosome-bound tRNAs. This chain is Large ribosomal subunit protein uL5, found in Acaryochloris marina (strain MBIC 11017).